The following is a 387-amino-acid chain: Flap endonuclease 1 (387 aa).

Residues 1-104 (MGILGLSKLI…GELAKRAERR (104 aa)) form an N-domain region. Asp34 provides a ligand contact to Mg(2+). DNA-binding residues include Arg47 and Arg70. Residues Asp86, Glu158, Glu160, Asp179, and Asp181 each coordinate Mg(2+). Residues 122–253 (GIEKFNRRLV…KRAIELINNY (132 aa)) are I-domain. Residue Glu158 coordinates DNA. The DNA site is built by Gly231 and Asp233. Asp233 is a Mg(2+) binding site. The tract at residues 336 to 344 (TQVRLDSFF) is interaction with PCNA. The interval 345-387 (KTLPSTPNATNAAKRKAEEAKKSANNKKAKTSGGGGGRGRRPK) is disordered.

It belongs to the XPG/RAD2 endonuclease family. FEN1 subfamily. In terms of assembly, interacts with PCNA. Three molecules of FEN1 bind to one PCNA trimer with each molecule binding to one PCNA monomer. PCNA stimulates the nuclease activity without altering cleavage specificity. Mg(2+) is required as a cofactor. In terms of processing, phosphorylated. Phosphorylation upon DNA damage induces relocalization to the nuclear plasma.

It localises to the nucleus. Its subcellular location is the nucleolus. The protein localises to the nucleoplasm. The protein resides in the mitochondrion. Structure-specific nuclease with 5'-flap endonuclease and 5'-3' exonuclease activities involved in DNA replication and repair. During DNA replication, cleaves the 5'-overhanging flap structure that is generated by displacement synthesis when DNA polymerase encounters the 5'-end of a downstream Okazaki fragment. It enters the flap from the 5'-end and then tracks to cleave the flap base, leaving a nick for ligation. Also involved in the long patch base excision repair (LP-BER) pathway, by cleaving within the apurinic/apyrimidinic (AP) site-terminated flap. Acts as a genome stabilization factor that prevents flaps from equilibrating into structures that lead to duplications and deletions. Also possesses 5'-3' exonuclease activity on nicked or gapped double-stranded DNA, and exhibits RNase H activity. Also involved in replication and repair of rDNA and in repairing mitochondrial DNA. The polypeptide is Flap endonuclease 1 (Drosophila yakuba (Fruit fly)).